The primary structure comprises 456 residues: Bifunctional protein GlmU (456 aa).

The interval 1 to 228 (MPQNTLNTVI…SHLAAGVNNK (228 aa)) is pyrophosphorylase. Residues 11–14 (LAAG), Lys-25, Gln-75, 80–81 (GT), 102–104 (YGD), Gly-138, Glu-153, Asn-168, and Asn-226 each bind UDP-N-acetyl-alpha-D-glucosamine. Residue Asp-104 coordinates Mg(2+). Asn-226 serves as a coordination point for Mg(2+). Residues 229–249 (RQLAELERIFQTEQAQELLKA) are linker. An N-acetyltransferase region spans residues 250-456 (GVTLRDPARF…GWMRPEKDKQ (207 aa)). Residues Arg-332 and Lys-350 each coordinate UDP-N-acetyl-alpha-D-glucosamine. The active-site Proton acceptor is His-362. UDP-N-acetyl-alpha-D-glucosamine contacts are provided by Tyr-365 and Asn-376. Acetyl-CoA contacts are provided by residues Ala-379, 385-386 (NY), Ser-404, Ala-422, and Arg-439.

This sequence in the N-terminal section; belongs to the N-acetylglucosamine-1-phosphate uridyltransferase family. It in the C-terminal section; belongs to the transferase hexapeptide repeat family. In terms of assembly, homotrimer. The cofactor is Mg(2+).

It is found in the cytoplasm. It carries out the reaction alpha-D-glucosamine 1-phosphate + acetyl-CoA = N-acetyl-alpha-D-glucosamine 1-phosphate + CoA + H(+). The enzyme catalyses N-acetyl-alpha-D-glucosamine 1-phosphate + UTP + H(+) = UDP-N-acetyl-alpha-D-glucosamine + diphosphate. It participates in nucleotide-sugar biosynthesis; UDP-N-acetyl-alpha-D-glucosamine biosynthesis; N-acetyl-alpha-D-glucosamine 1-phosphate from alpha-D-glucosamine 6-phosphate (route II): step 2/2. It functions in the pathway nucleotide-sugar biosynthesis; UDP-N-acetyl-alpha-D-glucosamine biosynthesis; UDP-N-acetyl-alpha-D-glucosamine from N-acetyl-alpha-D-glucosamine 1-phosphate: step 1/1. The protein operates within bacterial outer membrane biogenesis; LPS lipid A biosynthesis. In terms of biological role, catalyzes the last two sequential reactions in the de novo biosynthetic pathway for UDP-N-acetylglucosamine (UDP-GlcNAc). The C-terminal domain catalyzes the transfer of acetyl group from acetyl coenzyme A to glucosamine-1-phosphate (GlcN-1-P) to produce N-acetylglucosamine-1-phosphate (GlcNAc-1-P), which is converted into UDP-GlcNAc by the transfer of uridine 5-monophosphate (from uridine 5-triphosphate), a reaction catalyzed by the N-terminal domain. The polypeptide is Bifunctional protein GlmU (Neisseria gonorrhoeae (strain ATCC 700825 / FA 1090)).